The following is a 398-amino-acid chain: Unsaturated chondroitin disaccharide hydrolase (398 aa).

Asp-115 acts as the Nucleophile in catalysis. 8 residues coordinate substrate: Asp-115, Asp-175, Gly-233, Thr-235, Arg-247, Trp-251, Ser-365, and Ser-368. The Proton donor role is filled by Asp-175.

This sequence belongs to the glycosyl hydrolase 88 family. As to quaternary structure, monomer.

It carries out the reaction beta-D-4-deoxy-Delta(4)-GlcpA-(1-&gt;3)-beta-D-GalpNAc6S + H2O = N-acetyl-beta-D-galactosamine 6-sulfate + 5-dehydro-4-deoxy-D-glucuronate. In terms of biological role, catalyzes the hydrolysis of unsaturated hyaluronate and chondroitin disaccharides. Also degrades unsaturated heparin disaccharides. Releases 4-deoxy-4,5-didehydro D-glucuronic acid or 4-deoxy-4,5-didehydro L-iduronic acid from chondroitin disaccharides, hyaluronan disaccharides and heparin disaccharides and cleaves both glycosidic (1-&gt;3) and (1-&gt;4) bonds. Prefers sulfated glycosaminoglycans compared to unsulfated glycosaminoglycans. Probably required for mammalian cells invasion through the degradation of extracellular sulfated glycosaminoglycans such as chondroitin and hyaluronan. This is Unsaturated chondroitin disaccharide hydrolase from Streptococcus agalactiae serotype III (strain NEM316).